Reading from the N-terminus, the 409-residue chain is Histidine--tRNA ligase (409 aa).

The protein belongs to the class-II aminoacyl-tRNA synthetase family. Homodimer.

The protein resides in the cytoplasm. It carries out the reaction tRNA(His) + L-histidine + ATP = L-histidyl-tRNA(His) + AMP + diphosphate + H(+). The sequence is that of Histidine--tRNA ligase from Campylobacter fetus subsp. fetus (strain 82-40).